The chain runs to 428 residues: Adenylosuccinate synthetase (428 aa).

GTP-binding positions include 12–18 (GDEGKGK) and 40–42 (GHT). Asp-13 (proton acceptor) is an active-site residue. Residues Asp-13 and Gly-40 each coordinate Mg(2+). Residues 13–16 (DEGK), 38–41 (NAGH), Thr-130, Arg-144, Gln-225, Thr-240, and Arg-304 contribute to the IMP site. Residue His-41 is the Proton donor of the active site. Residue 300 to 306 (VTTGRAR) coordinates substrate. GTP-binding positions include Arg-306, 332–334 (KID), and 414–416 (SVG).

Belongs to the adenylosuccinate synthetase family. Homodimer. It depends on Mg(2+) as a cofactor.

The protein localises to the cytoplasm. It catalyses the reaction IMP + L-aspartate + GTP = N(6)-(1,2-dicarboxyethyl)-AMP + GDP + phosphate + 2 H(+). It participates in purine metabolism; AMP biosynthesis via de novo pathway; AMP from IMP: step 1/2. Its function is as follows. Plays an important role in the de novo pathway of purine nucleotide biosynthesis. Catalyzes the first committed step in the biosynthesis of AMP from IMP. This chain is Adenylosuccinate synthetase, found in Clostridium kluyveri (strain ATCC 8527 / DSM 555 / NBRC 12016 / NCIMB 10680 / K1).